We begin with the raw amino-acid sequence, 264 residues long: Undecaprenyl-diphosphatase (264 aa).

8 helical membrane-spanning segments follow: residues 1-21 (MEIS…FLPI), 39-59 (QGLA…LFYF), 83-103 (SLLV…GLLF), 113-133 (SGVV…FADL), 143-163 (MTIK…IPGV), 184-204 (ANFS…LESI), 220-240 (LGVI…MGII), and 243-263 (IRML…LYLF).

Belongs to the UppP family.

The protein localises to the cell inner membrane. The catalysed reaction is di-trans,octa-cis-undecaprenyl diphosphate + H2O = di-trans,octa-cis-undecaprenyl phosphate + phosphate + H(+). Catalyzes the dephosphorylation of undecaprenyl diphosphate (UPP). Confers resistance to bacitracin. The chain is Undecaprenyl-diphosphatase from Campylobacter concisus (strain 13826).